The chain runs to 318 residues: Ribose-phosphate pyrophosphokinase (318 aa).

ATP contacts are provided by residues D46–E48 and R105–Q106. Residues H139 and D178 each coordinate Mg(2+). K201 is a catalytic residue. D-ribose 5-phosphate is bound by residues R203, D227, and D231–T235.

The protein belongs to the ribose-phosphate pyrophosphokinase family. Class I subfamily. As to quaternary structure, homohexamer. Requires Mg(2+) as cofactor.

The protein resides in the cytoplasm. It carries out the reaction D-ribose 5-phosphate + ATP = 5-phospho-alpha-D-ribose 1-diphosphate + AMP + H(+). Its pathway is metabolic intermediate biosynthesis; 5-phospho-alpha-D-ribose 1-diphosphate biosynthesis; 5-phospho-alpha-D-ribose 1-diphosphate from D-ribose 5-phosphate (route I): step 1/1. Involved in the biosynthesis of the central metabolite phospho-alpha-D-ribosyl-1-pyrophosphate (PRPP) via the transfer of pyrophosphoryl group from ATP to 1-hydroxyl of ribose-5-phosphate (Rib-5-P). The protein is Ribose-phosphate pyrophosphokinase of Helicobacter pylori (strain ATCC 700392 / 26695) (Campylobacter pylori).